A 322-amino-acid chain; its full sequence is MNFKYSILFICFGTLDRGLIPECPFNEYDILFFVYTRQQRDGIVLTEETLQNYDLFKKSTISRQVVFIDHGFLSNGNNENFIAMAKALIEKDNFLVISVDWKKGACNAFASTLDYLGYSTAVGNTRHVGKYVADFTKLLVEQYKVSMSNIRLIGHSLGAHTSGFAGKEVQELKLNKYSNIDGLDPAGPSFDSNDCPERLCETDAEYVQIIHTSNILGVYSKIGTVDFYMNYGSHQPGCGRFFSPSCSHTKAVKYLTECIKHECCLIGTPWKKYFSTPKPISQCTKDTCVCVGLNAKSYPARGSFYVPVEATAPYCHNEGIKL.

An N-terminal signal peptide occupies residues 1–18 (MNFKYSILFICFGTLDRG). An intrachain disulfide couples Cys-23 to Cys-106. Ser-156 serves as the catalytic Nucleophile. Asp-184 serves as the catalytic Charge relay system. Cystine bridges form between Cys-195/Cys-200 and Cys-238/Cys-246. The active-site Charge relay system is His-248. 3 cysteine pairs are disulfide-bonded: Cys-263/Cys-290, Cys-264/Cys-315, and Cys-283/Cys-288.

It belongs to the AB hydrolase superfamily. Lipase family. Post-translationally, contains six disulfide bonds. In terms of processing, is not glycosylated. Expressed by the venom gland.

It localises to the secreted. The enzyme catalyses a 1,2-diacyl-sn-glycero-3-phosphocholine + H2O = a 2-acyl-sn-glycero-3-phosphocholine + a fatty acid + H(+). In terms of biological role, catalyzes the hydrolysis of phosphatidylcholine with phospholipase A1 activity. Shows hemolytic activity. Acts as an allergen. The chain is Phospholipase A1 from Polybia paulista (Neotropical social wasp).